The chain runs to 227 residues: Cytochrome c oxidase subunit 2 (227 aa).

The Mitochondrial intermembrane segment spans residues 1–14; that stretch reads MAYPFQLGLXDATS. A helical transmembrane segment spans residues 15-45; the sequence is PIMEELLHFHDHTLMIVFLISSLVLYIITLM. At 46-59 the chain is on the mitochondrial matrix side; the sequence is LTTKLTHTSTMDAQ. A helical membrane pass occupies residues 60–87; that stretch reads EVETVWTILPAIILILIALPSLRILYMM. At 88-227 the chain is on the mitochondrial intermembrane side; it reads DEINNPSLTV…YFETWSAVMV (140 aa). His161, Cys196, Glu198, Cys200, His204, and Met207 together coordinate Cu cation. Position 198 (Glu198) interacts with Mg(2+).

The protein belongs to the cytochrome c oxidase subunit 2 family. In terms of assembly, component of the cytochrome c oxidase (complex IV, CIV), a multisubunit enzyme composed of 14 subunits. The complex is composed of a catalytic core of 3 subunits MT-CO1, MT-CO2 and MT-CO3, encoded in the mitochondrial DNA, and 11 supernumerary subunits COX4I, COX5A, COX5B, COX6A, COX6B, COX6C, COX7A, COX7B, COX7C, COX8 and NDUFA4, which are encoded in the nuclear genome. The complex exists as a monomer or a dimer and forms supercomplexes (SCs) in the inner mitochondrial membrane with NADH-ubiquinone oxidoreductase (complex I, CI) and ubiquinol-cytochrome c oxidoreductase (cytochrome b-c1 complex, complex III, CIII), resulting in different assemblies (supercomplex SCI(1)III(2)IV(1) and megacomplex MCI(2)III(2)IV(2)). Found in a complex with TMEM177, COA6, COX18, COX20, SCO1 and SCO2. Interacts with TMEM177 in a COX20-dependent manner. Interacts with COX20. Interacts with COX16. It depends on Cu cation as a cofactor.

Its subcellular location is the mitochondrion inner membrane. The enzyme catalyses 4 Fe(II)-[cytochrome c] + O2 + 8 H(+)(in) = 4 Fe(III)-[cytochrome c] + 2 H2O + 4 H(+)(out). In terms of biological role, component of the cytochrome c oxidase, the last enzyme in the mitochondrial electron transport chain which drives oxidative phosphorylation. The respiratory chain contains 3 multisubunit complexes succinate dehydrogenase (complex II, CII), ubiquinol-cytochrome c oxidoreductase (cytochrome b-c1 complex, complex III, CIII) and cytochrome c oxidase (complex IV, CIV), that cooperate to transfer electrons derived from NADH and succinate to molecular oxygen, creating an electrochemical gradient over the inner membrane that drives transmembrane transport and the ATP synthase. Cytochrome c oxidase is the component of the respiratory chain that catalyzes the reduction of oxygen to water. Electrons originating from reduced cytochrome c in the intermembrane space (IMS) are transferred via the dinuclear copper A center (CU(A)) of subunit 2 and heme A of subunit 1 to the active site in subunit 1, a binuclear center (BNC) formed by heme A3 and copper B (CU(B)). The BNC reduces molecular oxygen to 2 water molecules using 4 electrons from cytochrome c in the IMS and 4 protons from the mitochondrial matrix. This chain is Cytochrome c oxidase subunit 2 (MT-CO2), found in Vulpes corsac (Corsac fox).